Here is a 291-residue protein sequence, read N- to C-terminus: E3 ubiquitin-protein ligase MARCHF8 (291 aa).

Residues tyrosine 22–isoleucine 72 are disordered. Residues lysine 25–leucine 39 are compositionally biased toward basic and acidic residues. The segment covering serine 50–isoleucine 72 has biased composition (low complexity). The RING-CH-type zinc-finger motif lies at isoleucine 72–glutamate 133. 8 residues coordinate Zn(2+): cysteine 80, cysteine 83, cysteine 97, cysteine 99, histidine 107, cysteine 110, cysteine 123, and cysteine 126. A run of 2 helical transmembrane segments spans residues cysteine 157–isoleucine 177 and phenylalanine 197–valine 217. Serine 253 carries the post-translational modification Phosphoserine.

Interacts with CD86. In terms of tissue distribution, broadly expressed. Present in immature dendritic cells (at protein level).

Its subcellular location is the golgi apparatus membrane. It localises to the endoplasmic reticulum membrane. It is found in the cytoplasmic vesicle membrane. The protein localises to the lysosome membrane. The protein resides in the early endosome membrane. It carries out the reaction S-ubiquitinyl-[E2 ubiquitin-conjugating enzyme]-L-cysteine + [acceptor protein]-L-lysine = [E2 ubiquitin-conjugating enzyme]-L-cysteine + N(6)-ubiquitinyl-[acceptor protein]-L-lysine.. Its pathway is protein modification; protein ubiquitination. In terms of biological role, E3 ubiquitin-protein ligase that plays several important roles in innate immunity and adaptive immunity. Mediates ubiquitination of CD86 and MHC class II proteins, such as HLA-DR alpha and beta, and promotes their subsequent endocytosis and sorting to lysosomes via multivesicular bodies. Possesses a very broad antiviral activity by specifically inactivating different viral fusion proteins. Targets and ubiquitinates cytoplasmic lysine residues of viral envelope glycoproteins with single transmembrane domains leading to their lysosomal degradation. Therefore, shows broad-spectrum inhibition against many viruses including retroviruses, rhabdoviruses, arenaviruses, sarbecoviruses or influenzaviruses. Strongly blocks human immunodeficiency virus type 1 envelope glycoprotein incorporation into virions by down-regulating its cell surface expression. Also blocks ebola virus glycoprotein/GP incorporation via surface down-regulation. Mediates 'Lys-63'-linked polyubiquitination of influenza M2 to target it to lysosome for degradation. Mediates the regulation of constitutive ubiquitination and trafficking of the viral restriction factor BST2 within the endocytic pathway. Plays a role in maintenance of immune tolerance to self by promoting the turnover and proteasomal degradation of PD-L1/CD274 via ubiquitination. Catalyzes the 'Lys-63'-linked polyubiquitylation of cGAS thereby inhibiting its DNA binding ability and impairing its antiviral innate immunity. Negatively regulates IL7-mediated T-cell homeostasis by mediating 'Lys-27'-linked polyubiquitination of IL7R, leading to its lysosomal degradation. Functionally, (Microbial infection) Mediates 'Lys-63'-linked polyubiquitination of hepatitis C virus/HCV protein NS2 which allows its binding to HGS, an ESCRT-0 complex component, and this interaction is essential for HCV envelopment. This Homo sapiens (Human) protein is E3 ubiquitin-protein ligase MARCHF8.